Here is a 164-residue protein sequence, read N- to C-terminus: UPF0304 protein YfbU (164 aa).

It belongs to the UPF0304 family.

This chain is UPF0304 protein YfbU, found in Escherichia coli O127:H6 (strain E2348/69 / EPEC).